The following is an 80-amino-acid chain: Small membrane A-kinase anchor protein (80 aa).

A lipid anchor (N-myristoyl glycine) is attached at Gly-2.

It belongs to the small membrane AKAP family. In terms of processing, may be palmitoylated at Cys-3.

Its subcellular location is the cell membrane. Its function is as follows. Binds to type I regulatory subunits of protein kinase A and may anchor/target them to the plasma membrane. In Tetraodon nigroviridis (Spotted green pufferfish), this protein is Small membrane A-kinase anchor protein.